The sequence spans 617 residues: Prothrombin (617 aa).

Residues 1–24 (MLHVRGLGLPGCLALAALASLVHS) form the signal peptide. Residues 25–43 (QHVFLAPQQALSLLQRVRR) constitute a propeptide that is removed on maturation. In terms of domain architecture, Gla spans 44-90 (ANSGFLEELRKGNLERECVEEQCSYEEAFEALESPQDTDVFWAKYTV). 4-carboxyglutamate is present on residues E50, E51, E58, E60, E63, E64, E69, E70, E73, and E76. C61 and C66 are oxidised to a cystine. Intrachain disulfides connect C91–C104, C109–C187, C130–C170, C158–C182, C215–C292, C236–C276, C264–C287, C332–C478, C387–C403, and C532–C546. 2 consecutive Kringle domains span residues 109–187 (CAMD…IPVC) and 215–292 (CLLE…LNYC). 2 N-linked (GlcNAc...) asparagine glycosylation sites follow: N120 and N144. The Peptidase S1 domain occupies 360 to 614 (IVEGWDAEKG…LKRWMQKVID (255 aa)). Residue H402 is the Charge relay system of the active site. N-linked (GlcNAc...) asparagine glycosylation occurs at N412. Catalysis depends on D458, which acts as the Charge relay system. The segment at 547–569 (AGFKVNDTKRGDACEGDSGGPFV) is high affinity receptor-binding region which is also known as the TP508 peptide. A glycan (N-linked (GlcNAc...) asparagine) is linked at N552. Residues C560 and C590 are joined by a disulfide bond. S564 (charge relay system) is an active-site residue.

Belongs to the peptidase S1 family. As to quaternary structure, heterodimer (named alpha-thrombin) of a light and a heavy chain; disulfide-linked. Forms a heterodimer with SERPINA5. In plasma, interacts (via N-terminus) with alpha-1-microglobulin; this interaction does not prevent the activation of prothrombin to thrombin. In terms of processing, the gamma-carboxyglutamyl residues, which bind calcium ions, result from the carboxylation of glutamyl residues by a microsomal enzyme, the vitamin K-dependent carboxylase. The modified residues are necessary for the calcium-dependent interaction with a negatively charged phospholipid surface, which is essential for the conversion of prothrombin to thrombin. In the penultimate step of the coagulation cascade, prothrombin is converted to thrombin by the prothrombinase complex composed of factor Xa (F10), cofactor Va (F5), and phospholipids. This activation requires factor Xa-catalyzed sequential cleavage at 2 sites, Arg-310 and Arg-359, along 2 possible pathways. In the first pathway, the first cleavage occurs at Arg-310, leading to the formation of the inactive intermediate prethrombin-2. This pathway preferentially occurs on platelets and in the absence of cofactor Va. In the second pathway, the first cleavage occurs at Arg-359, which separates protease domain into 2 chains that remain connected through a disulfide bond and generates the active intermediate meizothrombin. The presence of cofactor Va directs activation along the meizothrombin pathway and greatly accelerates the rate of cleavage at Arg-359, but has a smaller effect on the cleavage of meizothrombin at Arg-310. Meizothrombin accumulates as an intermediate when prothrombinase is assembled on the membrane of red blood cells.

The enzyme catalyses Selective cleavage of Arg-|-Gly bonds in fibrinogen to form fibrin and release fibrinopeptides A and B.. Activity is promoted in the presence of negatively charged surfaces, such as polyphosphate and dextran sulfate. Inhibited by SERPINA5. Thrombin, which cleaves bonds after Arg and Lys, converts fibrinogen to fibrin and activates factors V, VII, VIII, XIII, and, in complex with thrombomodulin, protein C. Functions in blood homeostasis, inflammation and wound healing. Activates coagulation factor XI (F11); activation is promoted by the contact with negatively charged surfaces. Triggers the production of pro-inflammatory cytokines, such as MCP-1/CCL2 and IL8/CXCL8, in endothelial cells. This chain is Prothrombin (F2), found in Rattus norvegicus (Rat).